A 567-amino-acid polypeptide reads, in one-letter code: Potassium-transporting ATPase potassium-binding subunit (567 aa).

11 consecutive transmembrane segments (helical) span residues 3–23 (FIGW…VKPL), 64–84 (LTFT…IYAV), 136–156 (ALTH…MALI), 179–199 (LYVL…QGMP), 254–274 (LSNF…TNVF), 285–305 (WAIL…AYWA), 330–350 (FGIV…CGAV), 357–376 (FTAL…EIIV), 421–441 (MLAI…AVVL), 473–495 (AFGG…MFVG), and 527–547 (GGLF…LTFF).

This sequence belongs to the KdpA family. As to quaternary structure, the system is composed of three essential subunits: KdpA, KdpB and KdpC.

The protein resides in the cell inner membrane. Part of the high-affinity ATP-driven potassium transport (or Kdp) system, which catalyzes the hydrolysis of ATP coupled with the electrogenic transport of potassium into the cytoplasm. This subunit binds the periplasmic potassium ions and delivers the ions to the membrane domain of KdpB through an intramembrane tunnel. In Rhodopseudomonas palustris (strain ATCC BAA-98 / CGA009), this protein is Potassium-transporting ATPase potassium-binding subunit.